The following is a 355-amino-acid chain: WAT1-related protein At3g28130 (355 aa).

10 helical membrane-spanning segments follow: residues 11–31 (AVLLTAMLATETGNVAMNTLF), 42–62 (YTFLIYSYLIGSIVLLPSHIF), 80–100 (IGVLGLLGSTYLITGFIGIEY), 104–124 (TLASAISNINPAITFILAIIF), 136–156 (SVAKMVGTIVSLVGALVVVLY), 186–206 (WIIGGCLLAIKDTLVPVAFIL), 218–238 (FTVSFFYFLIASILTSLIGIV), 244–264 (PSIWIIHFDITLVCIVVGGIF), 290–310 (LSILIAVIMGAIFLGDSFYLG), and 311–331 (SLVGGILISLGFYTVMWGKAK). One can recognise an EamA domain in the interval 29-154 (TLFKAATSKG…VSLVGALVVV (126 aa)).

Belongs to the drug/metabolite transporter (DMT) superfamily. Plant drug/metabolite exporter (P-DME) (TC 2.A.7.4) family.

Its subcellular location is the membrane. This chain is WAT1-related protein At3g28130, found in Arabidopsis thaliana (Mouse-ear cress).